We begin with the raw amino-acid sequence, 42 residues long: uncharacterized protein (42 aa).

Residues 10-30 (VANWVTVILMALAGYAVLALA) form a helical membrane-spanning segment.

The protein resides in the host membrane. This is an uncharacterized protein from Acinetobacter calcoaceticus (Arthrobacter siderocapsulatus).